A 163-amino-acid polypeptide reads, in one-letter code: Nucleotide-binding protein CYB_0891 (163 aa).

Belongs to the YajQ family.

Functionally, nucleotide-binding protein. The polypeptide is Nucleotide-binding protein CYB_0891 (Synechococcus sp. (strain JA-2-3B'a(2-13)) (Cyanobacteria bacterium Yellowstone B-Prime)).